The chain runs to 43 residues: Bacteriocin leucocin-C (43 aa).

A disulfide bond links Cys-9 and Cys-14.

It localises to the secreted. Functionally, inhibits a wide spectrum of lactic acid bacteria. In Leuconostoc mesenteroides, this protein is Bacteriocin leucocin-C.